The following is a 336-amino-acid chain: Probable tRNA pseudouridine synthase B (336 aa).

The active-site Nucleophile is the Asp-81. In terms of domain architecture, PUA spans 248-323 (LKKVVVKDSA…VAVDVERVYM (76 aa)).

The protein belongs to the pseudouridine synthase TruB family. Type 2 subfamily.

It carries out the reaction uridine(55) in tRNA = pseudouridine(55) in tRNA. Functionally, could be responsible for synthesis of pseudouridine from uracil-55 in the psi GC loop of transfer RNAs. The chain is Probable tRNA pseudouridine synthase B from Methanocaldococcus jannaschii (strain ATCC 43067 / DSM 2661 / JAL-1 / JCM 10045 / NBRC 100440) (Methanococcus jannaschii).